We begin with the raw amino-acid sequence, 209 residues long: rRNA N(6)-adenosine-methyltransferase METTL5 (209 aa).

S-adenosyl-L-methionine contacts are provided by residues Gln-28, Thr-31, Gly-59, Cys-62, Val-64, Asp-81, and 108 to 109 (DV).

It belongs to the methyltransferase superfamily. PrmA family. Heterodimer; heterodimerizes with TRMT112. Expressed from very early development (8 post-conceptual weeks) and expression persists through adulthood in multiple substructures of the brain, including the cerebellar cortex, hippocampus, and striatum.

It is found in the nucleus. Its subcellular location is the presynapse. It localises to the postsynapse. The enzyme catalyses adenosine(1832) in 18S rRNA + S-adenosyl-L-methionine = N(6)-methyladenosine(1832) in 18S rRNA + S-adenosyl-L-homocysteine + H(+). RRNA N6-adenosine-methyltransferase activity is inhibited by zinc. Its function is as follows. Catalytic subunit of a heterodimer with TRMT112, which specifically methylates the 6th position of adenine in position 1832 of 18S rRNA. N6-methylation of adenine(1832) in 18S rRNA resides in the decoding center of 18S rRNA and is required for translation and embryonic stem cells (ESCs) pluripotency and differentiation. The sequence is that of rRNA N(6)-adenosine-methyltransferase METTL5 from Homo sapiens (Human).